Consider the following 76-residue polypeptide: Paralithocin 3 (76 aa).

An N-terminal signal peptide occupies residues 1–23 (MGPMKVLLVMLVVMVAAPHIADA). Cystine bridges form between C31–C62, C40–C58, C44–C56, and C49–C59. Proline amide; partial is present on P74.

The protein belongs to the paralithocin family. The amidated form is probably the active form.

Has antibacterial activity, mainly against marine Gram-positive bacteria like C.maltaromaticum (MIC=25 uM), C.mobile (MIC=12.5 uM), C.divergens (MIC=25 uM) and C.funditum (MIC=12.5 uM) but also against C.glutamicum (MIC=12.5 uM). Has very little or no activity against Gram-negative bacteria. This Paralithodes camtschaticus (Red king crab) protein is Paralithocin 3.